A 178-amino-acid chain; its full sequence is Ribosome maturation factor RimM (178 aa).

Positions 101–178 constitute a PRC barrel domain; sequence ADEYYWYQLE…VMRVEWDADF (78 aa).

The protein belongs to the RimM family. Binds ribosomal protein uS19.

It localises to the cytoplasm. Functionally, an accessory protein needed during the final step in the assembly of 30S ribosomal subunit, possibly for assembly of the head region. Essential for efficient processing of 16S rRNA. May be needed both before and after RbfA during the maturation of 16S rRNA. It has affinity for free ribosomal 30S subunits but not for 70S ribosomes. This chain is Ribosome maturation factor RimM, found in Pseudomonas fluorescens (strain Pf0-1).